We begin with the raw amino-acid sequence, 466 residues long: ATP synthase subunit beta (466 aa).

ATP is bound at residue 153–160; that stretch reads GGAGVGKT.

The protein belongs to the ATPase alpha/beta chains family. F-type ATPases have 2 components, CF(1) - the catalytic core - and CF(0) - the membrane proton channel. CF(1) has five subunits: alpha(3), beta(3), gamma(1), delta(1), epsilon(1). CF(0) has three main subunits: a(1), b(2) and c(9-12). The alpha and beta chains form an alternating ring which encloses part of the gamma chain. CF(1) is attached to CF(0) by a central stalk formed by the gamma and epsilon chains, while a peripheral stalk is formed by the delta and b chains.

It localises to the cell membrane. It carries out the reaction ATP + H2O + 4 H(+)(in) = ADP + phosphate + 5 H(+)(out). Its function is as follows. Produces ATP from ADP in the presence of a proton gradient across the membrane. The catalytic sites are hosted primarily by the beta subunits. In Oenococcus oeni (strain ATCC BAA-331 / PSU-1), this protein is ATP synthase subunit beta.